A 324-amino-acid chain; its full sequence is MSRRRRFKGRDVHGIILLDKPGGITSNDALQQVKRIYNAAKAGHTGALDPLATGMLPICFGEATKFSQFLLDADKRYQVTARLGVRTDTSDSEGSVVSVRPVDVSEDQLAQALDKFRGDIMQVPSMFSALKHQGRPLYEYAREGIEIEREARPITIYSLELKAFSGEEISLEVHCSKGTYIRSLIDDLGELLGCGAHVIQLRRTQVACYPNDKMLNLEKLNEILDECREQGVPPRERLDQYLLPMDSAVYSLPEVNMPPVLAAYVTQGQAVMVPHAPIEGFVRMTVGPEAEFIGVGEIDDDGKVAPRRLVRIGGDMPDAEEQAE.

The active-site Nucleophile is D49.

The protein belongs to the pseudouridine synthase TruB family. Type 1 subfamily.

The catalysed reaction is uridine(55) in tRNA = pseudouridine(55) in tRNA. Its function is as follows. Responsible for synthesis of pseudouridine from uracil-55 in the psi GC loop of transfer RNAs. This is tRNA pseudouridine synthase B from Tolumonas auensis (strain DSM 9187 / NBRC 110442 / TA 4).